We begin with the raw amino-acid sequence, 262 residues long: uncharacterized protein (262 aa).

A coiled-coil region spans residues 41–118 (ELQKNEKIDK…EEKAEDFINK (78 aa)).

This is an uncharacterized protein from Plasmodium falciparum (isolate 3D7).